We begin with the raw amino-acid sequence, 319 residues long: Protein MGF 360-8L (319 aa).

This sequence belongs to the asfivirus MGF 360 family.

Functionally, plays a role in virus cell tropism, and may be required for efficient virus replication in macrophages. In Ornithodoros (relapsing fever ticks), this protein is Protein MGF 360-8L.